Reading from the N-terminus, the 132-residue chain is MKKEVILNSELAKIADDLGHTDQVCIGDLGLPVPSGVKKIDLALTRGKPTFQEVLDIYLENILVEKIYLADEIKENNPEQLKILLTKLSADVEVVFVSHETLKLMNHDVKAVVRTGENTPYSNIILQSGVAL.

His-20 serves as the catalytic Proton donor. Substrate-binding positions include Asp-28, His-99, and 121–123 (YSN).

Belongs to the RbsD / FucU family. RbsD subfamily. In terms of assembly, homodecamer.

It localises to the cytoplasm. It carries out the reaction beta-D-ribopyranose = beta-D-ribofuranose. Its pathway is carbohydrate metabolism; D-ribose degradation; D-ribose 5-phosphate from beta-D-ribopyranose: step 1/2. Functionally, catalyzes the interconversion of beta-pyran and beta-furan forms of D-ribose. In Lactococcus lactis subsp. cremoris (strain SK11), this protein is D-ribose pyranase.